A 445-amino-acid polypeptide reads, in one-letter code: Phosphoglucosamine mutase (445 aa).

S102 (phosphoserine intermediate) is an active-site residue. S102, D241, D243, and D245 together coordinate Mg(2+). S102 carries the phosphoserine modification.

Belongs to the phosphohexose mutase family. It depends on Mg(2+) as a cofactor. Activated by phosphorylation.

It carries out the reaction alpha-D-glucosamine 1-phosphate = D-glucosamine 6-phosphate. Functionally, catalyzes the conversion of glucosamine-6-phosphate to glucosamine-1-phosphate. The chain is Phosphoglucosamine mutase from Shewanella denitrificans (strain OS217 / ATCC BAA-1090 / DSM 15013).